Reading from the N-terminus, the 342-residue chain is MACEPQVDPGATGPLPPSSPGWSALPGGSPPGWGQELHNGQVLTVLRIDNTCAPISFDLGAAEEQLQTWGIQVPADQYRSLAESALLEPQVRRYIIYNSRPMRLAFAVVFYVVVWANIYSTSQMFALGNHWAGMLLVTLAAVSLTLTLVLVFERHQKKANTNTDLRLAAANGALLRHRVLLGVTDTVEGCQSVIQLWFVYFDLENCVQFLSDHVQEMKTSQESLLRSRLSQLCVVMETGVSPATAEGPENLEDAPLLPGNSCPNERPLMQTELHQLVPEAEPEEMARQLLAVFGGYYIRLLVTSQLPQAMGTRHTNSPRIPCPCQLIEAYILGTGCCPFLAR.

The disordered stretch occupies residues 1–30; sequence MACEPQVDPGATGPLPPSSPGWSALPGGSP. 2 helical membrane passes run 105–125 and 132–152; these read AFAV…SQMF and AGML…VLVF.

As to quaternary structure, interacts with ITGAM; this interaction inhibits ITGAM degradation via the endosome-lysosome pathway. Interacts with ITGB4; this interaction prevents ITGB4 degradation.

It localises to the cell membrane. Stabilizes cell surface expression of ITGAM and participates in the adhesion and migration of phagocytes during bacterial clearance. This Homo sapiens (Human) protein is Transmembrane protein 268.